The sequence spans 539 residues: Keratin, type II cytoskeletal 73 (539 aa).

Residues 1–130 (MNRQFTCKPG…DPEIQKVRAQ (130 aa)) are head. Residues 131 to 166 (EREQIKALNNKFASFIDKVRFLEQQNQVLQTKWELL) are coil 1A. Positions 131–444 (EREQIKALNN…KLLEGEECRM (314 aa)) constitute an IF rod domain. Residues 167 to 185 (QQLDLSNCRRNLEPVYEAH) are linker 1. The tract at residues 186–277 (ISSLQKQLDS…CLYEGEITQM (92 aa)) is coil 1B. Residues 278-301 (QSHISDTSVVLSMDNNRNLDLDSI) are linker 12. Positions 302 to 440 (IAEVRAQYED…ATYRKLLEGE (139 aa)) are coil 2. The tail stretch occupies residues 441-539 (ECRMSGEHTS…LGSPSKKTMR (99 aa)).

Belongs to the intermediate filament family. Heterotetramer of two type I and two type II keratins.

In terms of biological role, has a role in hair formation. Specific component of keratin intermediate filaments in the inner root sheath (IRS) of the hair follicle. This Mus musculus (Mouse) protein is Keratin, type II cytoskeletal 73 (Krt73).